A 222-amino-acid chain; its full sequence is Probable fimbrial chaperone EcpB (222 aa).

The first 20 residues, 1-20 (MKKHLLPLALLFSGISPAQA), serve as a signal peptide directing secretion.

Belongs to the EcpB/EcpE family.

Its function is as follows. Part of the ecpRABCDE operon, which encodes the E.coli common pilus (ECP). ECP is found in both commensal and pathogenic strains and plays a dual role in early-stage biofilm development and host cell recognition. The chain is Probable fimbrial chaperone EcpB (ecpB) from Escherichia coli O18:K1:H7 (strain IHE3034 / ExPEC).